Reading from the N-terminus, the 414-residue chain is 3-oxoacyl-[acyl-carrier-protein] synthase 2 (414 aa).

Positions Asn-4–Lys-411 constitute a Ketosynthase family 3 (KS3) domain. Residues Cys-165, His-304, and His-341 each act as for beta-ketoacyl synthase activity in the active site.

This sequence belongs to the thiolase-like superfamily. Beta-ketoacyl-ACP synthases family.

It carries out the reaction a fatty acyl-[ACP] + malonyl-[ACP] + H(+) = a 3-oxoacyl-[ACP] + holo-[ACP] + CO2. The enzyme catalyses (9Z)-hexadecenoyl-[ACP] + malonyl-[ACP] + H(+) = 3-oxo-(11Z)-octadecenoyl-[ACP] + holo-[ACP] + CO2. It participates in lipid metabolism; fatty acid biosynthesis. Functionally, involved in the type II fatty acid elongation cycle. Catalyzes the elongation of a wide range of acyl-ACP by the addition of two carbons from malonyl-ACP to an acyl acceptor. Can efficiently catalyze the conversion of palmitoleoyl-ACP (cis-hexadec-9-enoyl-ACP) to cis-vaccenoyl-ACP (cis-octadec-11-enoyl-ACP), an essential step in the thermal regulation of fatty acid composition. The protein is 3-oxoacyl-[acyl-carrier-protein] synthase 2 (fabF) of Staphylococcus aureus (strain MW2).